The chain runs to 2715 residues: Histone-lysine N-methyltransferase 2B (2715 aa).

The segment covering 1 to 11 has biased composition (gly residues); the sequence is MAAAAGGGSCP. Disordered stretches follow at residues 1-65, 81-302, 320-518, and 532-771; these read MAAA…GEDT, RRLW…GGLP, SLGL…PKST, and VSAR…QMPP. Ala2 is modified (N-acetylalanine). Residues 12 to 24 show a composition bias toward low complexity; it reads GPGSARGRFPGRP. The short motif at 17–36 is the Menin-binding motif (MBM) element; it reads RGRFPGRPRGAGGGGGRGGR. Gly residues-rich tracts occupy residues 25–38 and 49–60; these read RGAGGGGGRGGRGN and RGGGATGPGGAE. The a.T hook 1 DNA-binding region spans 37 to 44; the sequence is GNGAERVR. The segment covering 109 to 123 has biased composition (acidic residues); the sequence is PEEESSDGESDEEEF. Residues 110-117 constitute a DNA-binding region (a.T hook 2); sequence EEESSDGE. Phosphoserine is present on residues Ser113, Ser114, and Ser118. A compositionally biased stretch (basic residues) spans 144–158; sequence QRGRAPRGRGRKHKT. Pro residues predominate over residues 160-176; that stretch reads PLPPPRLADVAPTPPKT. Residues 199–208 are compositionally biased toward low complexity; that stretch reads RAQAPQAPRS. Ser351 bears the Phosphoserine mark. A DNA-binding region (a.T hook 3) is located at residues 357-365; it reads QEQKLDDEE. Positions 361–374 are enriched in acidic residues; sequence LDDEEEEKKEEEEK. The span at 375 to 387 shows a compositional bias: basic and acidic residues; the sequence is DKEGEEKEERAVA. Positions 401-449 are enriched in pro residues; sequence LPPPPLTPPAPSPPPPLPPPSTSPPPPLCPPPPPPVSPPPLPSPPPPPA. The span at 545 to 556 shows a compositional bias: basic and acidic residues; sequence RFMDEDPPKPPK. Residues 568 to 596 show a composition bias toward pro residues; that stretch reads TTSPPVPQEPAPVPSPPRAPTPPSTPVPL. Residues 597–608 show a composition bias toward basic and acidic residues; that stretch reads PEKRRSILREPT. The segment covering 618–637 has biased composition (pro residues); the sequence is LPPPPPAPPPPPAPSPPPAP. Residues 731-751 are compositionally biased toward low complexity; that stretch reads PQTQAQLLQPLQALQTQLLPQ. Positions 752–769 are enriched in pro residues; that stretch reads ALPPPQPQLQPPPSPQQM. Lys805 is covalently cross-linked (Glycyl lysine isopeptide (Lys-Gly) (interchain with G-Cter in SUMO2)). Disordered stretches follow at residues 819-868 and 894-959; these read PLSP…GPRI and SALP…HHGK. A phosphoserine mark is found at Ser821, Ser844, and Ser861. Residues 836–857 are compositionally biased toward basic and acidic residues; sequence ISDRGPVRSEDESVEAKRERPS. Low complexity predominate over residues 907-917; the sequence is EDTSSASETES. Ser936 carries the post-translational modification Phosphoserine. A compositionally biased stretch (basic residues) spans 948 to 959; the sequence is TPRRSLPSHHGK. The segment at 959–1006 adopts a CXXC-type zinc-finger fold; it reads KKMRMARCGHCRGCLRVQDCGSCVNCLDKPKFGGPNTKKQCCVYRKCD. Zn(2+)-binding residues include Cys966, Cys969, Cys972, Cys978, Cys981, Cys984, Cys1000, and Cys1005. Residues 1027 to 1132 are disordered; the sequence is LLPWDSDESP…RPRKPTLQPV (106 aa). Residues Ser1032, Ser1035, Ser1092, and Ser1095 each carry the phosphoserine modification. Lys1136 participates in a covalent cross-link: Glycyl lysine isopeptide (Lys-Gly) (interchain with G-Cter in SUMO2). The disordered stretch occupies residues 1146 to 1166; the sequence is LAPGPFASFPNGWTGKQKSPD. 3 consecutive PHD-type zinc fingers follow at residues 1201 to 1252, 1249 to 1303, and 1335 to 1396; these read PMVC…CKFC, CKFC…CVRC, and GNYC…CAGA. Positions 1404–1504 constitute a Bromo domain; sequence ALSGALQGGL…GLLLKLLESA (101 aa). Residues 1545 to 1567 form a disordered region; that stretch reads QQEPETPESGQPPGDPSAAFQGK. The C2HC pre-PHD-type zinc finger occupies 1578 to 1618; the sequence is PRQCALCLKYGDADSKEAGRLLYIGQNEWTHVNCAIWSAEV. The PHD-type 4 zinc finger occupies 1639 to 1686; sequence MRCELCLKPGATVGCCLSSCLSNFHFMCARASYCIFQDDKKVFCQKHT. The 57-residue stretch at 1727–1783 folds into the FYR N-terminal domain; the sequence is AINVLIGSIRIDSLGTLSDLSDCEGRLFPIGYQCSRLYWSTVDARRRCWYRCRILEY. 4 disordered regions span residues 1806–1978, 2008–2093, 2118–2162, and 2280–2412; these read HSPA…PDFE, VAAG…VVRA, LKNL…PTRT, and RVST…RTGP. The segment covering 1876 to 1894 has biased composition (low complexity); sequence PLGGVSFGPLPSPGSPSSL. 2 positions are modified to phosphoserine: Ser1930 and Ser1936. Residues 1960-1972 are compositionally biased toward pro residues; that stretch reads PPGPAPSPPPPED. Residues 2062–2072 show a composition bias toward acidic residues; that stretch reads DGVDDGTDSEA. Residues Thr2068 and Thr2083 each carry the phosphothreonine modification. The span at 2144 to 2153 shows a compositional bias: polar residues; sequence NGSQPSQGLT. Phosphoserine occurs at positions 2288 and 2348. Residues 2342–2351 show a composition bias toward low complexity; the sequence is EPAGEESPGP. Residues 2359 to 2373 are compositionally biased toward pro residues; that stretch reads LPLPEDGPPQVPDGP. Residues 2411–2492 enclose the FYR C-terminal domain; that stretch reads GPHLRFEISS…QRCQHYKFRY (82 aa). The short motif at 2508–2513 is the WDR5 interaction motif (WIN) element; sequence GAARAE. The region spanning 2575 to 2691 is the SET domain; it reads EAVGVYRSAI…RGEELTYDYK (117 aa). S-adenosyl-L-methionine contacts are provided by residues His2585, Arg2587, Tyr2629, and 2652–2653; that span reads NH. Positions 2655 and 2703 each coordinate Zn(2+). One can recognise a Post-SET domain in the interval 2699 to 2715; it reads NKLPCNCGAKRCRRFLN. An S-adenosyl-L-methionine-binding site is contributed by Asn2704. The Zn(2+) site is built by Cys2705 and Cys2710.

This sequence belongs to the class V-like SAM-binding methyltransferase superfamily. Histone-lysine methyltransferase family. TRX/MLL subfamily. As to quaternary structure, component of the menin-associated histone methyltransferase complex, at least composed of KMT2B/MLL4, ASH2L, RBBP5, WDR5, DPY30, MEN1; the complex interacts with POLR2A and POLR2B via MEN1. Interacts with NFE2. Interacts with KDM6B. Interacts (via WIN motif) with WDR5. Interacts (via MBM motif) with MEN1. Forms a core complex with the evolutionary conserved subcomplex WRAD composed of WDR5, RBBP5, ASH2L/ASH2 and DPY30 subunits; WRAD differentially stimulates the methyltransferase activity. In terms of tissue distribution, widely expressed. Highest levels in testis. Also found in brain with higher expression in the cerebellum than in any other region, bone marrow, heart, muscle, kidney, placenta, spleen, thymus, prostate, ovary, intestine, colon, peripheral blood lymphocytes and pancreas. Often amplified in pancreatic carcinomas.

The protein resides in the nucleus. The enzyme catalyses L-lysyl(4)-[histone H3] + S-adenosyl-L-methionine = N(6)-methyl-L-lysyl(4)-[histone H3] + S-adenosyl-L-homocysteine + H(+). It catalyses the reaction N(6)-methyl-L-lysyl(4)-[histone H3] + S-adenosyl-L-methionine = N(6),N(6)-dimethyl-L-lysyl(4)-[histone H3] + S-adenosyl-L-homocysteine + H(+). In terms of biological role, histone methyltransferase that catalyzes methyl group transfer from S-adenosyl-L-methionine to the epsilon-amino group of 'Lys-4' of histone H3 (H3K4) via a non-processive mechanism. Part of chromatin remodeling machinery predominantly forms H3K4me1 and H3K4me2 methylation marks at active chromatin sites where transcription and DNA repair take place. Likely plays a redundant role with KMT2C in enriching H3K4me1 marks on primed and active enhancer elements. Plays a central role in beta-globin locus transcription regulation by being recruited by NFE2. Plays an important role in controlling bulk H3K4me during oocyte growth and preimplantation development. Required during the transcriptionally active period of oocyte growth for the establishment and/or maintenance of bulk H3K4 trimethylation (H3K4me3), global transcriptional silencing that preceeds resumption of meiosis, oocyte survival and normal zygotic genome activation. In Homo sapiens (Human), this protein is Histone-lysine N-methyltransferase 2B (KMT2B).